The sequence spans 103 residues: Small ribosomal subunit protein uS10 (103 aa).

Belongs to the universal ribosomal protein uS10 family. As to quaternary structure, part of the 30S ribosomal subunit.

Its function is as follows. Involved in the binding of tRNA to the ribosomes. The polypeptide is Small ribosomal subunit protein uS10 (Neisseria gonorrhoeae).